Consider the following 314-residue polypeptide: Triosephosphate isomerase, chloroplastic (314 aa).

Residues 1–22 (MAVASTSLASQLSGPKSLSQPY) show a composition bias toward polar residues. The interval 1–25 (MAVASTSLASQLSGPKSLSQPYSGL) is disordered. The transit peptide at 1-59 (MAVASTSLASQLSGPKSLSQPYSGLRRSCPKLDQSHSSLFQHLSLSSSSRKASRAVVAM) directs the protein to the chloroplast. Substrate-binding residues include N70 and K72. H154 (electrophile) is an active-site residue. E224 functions as the Proton acceptor in the catalytic mechanism.

The protein belongs to the triosephosphate isomerase family. In terms of assembly, homodimer.

It localises to the plastid. The protein resides in the chloroplast. It catalyses the reaction D-glyceraldehyde 3-phosphate = dihydroxyacetone phosphate. The protein operates within carbohydrate biosynthesis; Calvin cycle. This Fragaria ananassa (Strawberry) protein is Triosephosphate isomerase, chloroplastic (TPI).